The following is a 382-amino-acid chain: uncharacterized protein (382 aa).

The next 12 membrane-spanning stretches (helical) occupy residues 14-34 (GLLL…LWLA), 45-65 (VVSS…GYVI), 79-99 (FIFA…SWLA), 102-122 (FVAG…LMCS), 131-151 (LLAA…LLVS), 157-177 (LMSV…PLLF), 204-224 (LGVN…GLMP), 235-255 (ASIG…QWPI), 270-290 (VQVF…AMAP), 291-311 (ALFI…AWAC), 325-345 (ALLL…AMLM), and 348-368 (FSDN…LLML).

This sequence belongs to the major facilitator superfamily. YcaD (TC 2.A.1.26) family.

It localises to the cell inner membrane. This is an uncharacterized protein from Escherichia coli O7:K1 (strain IAI39 / ExPEC).